We begin with the raw amino-acid sequence, 220 residues long: MAKNRFNQHWLHDHINDPYVKMAQREGYRARAAYKLKEIDEQDKLIRPGQVIVDLGAAPGSWSQYARNKLAQGKKRDAVREGGIDGTIVALDMLPMEPIADVHFIQGDFREDEVLHQLEAVLEGRTVDLVISDMAPNLSGVASADAARIEHVCDLALEFAQNHLKPDGALLVKCFHGSGYSQIVEKFKQQFKVVAPRKPKASRDKSSETFILGRHLKHPR.

S-adenosyl-L-methionine contacts are provided by Gly-60, Trp-62, Asp-92, Asp-108, and Asp-133. The active-site Proton acceptor is Lys-173.

The protein belongs to the class I-like SAM-binding methyltransferase superfamily. RNA methyltransferase RlmE family.

Its subcellular location is the cytoplasm. The catalysed reaction is uridine(2552) in 23S rRNA + S-adenosyl-L-methionine = 2'-O-methyluridine(2552) in 23S rRNA + S-adenosyl-L-homocysteine + H(+). Specifically methylates the uridine in position 2552 of 23S rRNA at the 2'-O position of the ribose in the fully assembled 50S ribosomal subunit. This Burkholderia multivorans (strain ATCC 17616 / 249) protein is Ribosomal RNA large subunit methyltransferase E.